The following is a 427-amino-acid chain: Riboflavin transporter rft-1 (427 aa).

Residues 1–2 (MK) are Cytoplasmic-facing. The chain crosses the membrane as a helical span at residues 3 to 23 (TFLFTFCLVAIFGSSSWIGTN). Residues 24–42 (SVWMELSLLTAKLPEGWNL) lie on the Extracellular side of the membrane. Residues 43–63 (PSYLSAIVQIACLGPLIYSII) form a helical membrane-spanning segment. At 64–73 (HKGIKMTIPT) the chain is on the cytoplasmic side. Residues 74-94 (VPLIFIFMVLACICQLGLCFF) form a helical membrane-spanning segment. Over 95-111 (WDDTGYIFGAIRSWPLY) the chain is Extracellular. A helical transmembrane segment spans residues 112-132 (LLLFGLAIVDAISSVLFLPFM). Residues 133 to 139 (AQFHPSF) lie on the Cytoplasmic side of the membrane. Residues 140–160 (LNAYFVGMGLSALIPSLLSLI) traverse the membrane as a helical segment. The Extracellular portion of the chain corresponds to 161 to 184 (QGTSNYWCDDNKTPHYYPPRFSVS). A helical transmembrane segment spans residues 185 to 205 (MFFLINFFFTCAAVAAFLVLY). Residues 206–261 (KIGAHKNSSQVEPEPKHSIQIIQGDSTTDVNEVNTESSFQETSSIPDSSSATGARL) lie on the Cytoplasmic side of the membrane. The helical transmembrane segment at 262-282 (AFLLLTTALVNAQMNGIVTSV) threads the bilayer. The Extracellular segment spans residues 283 to 297 (QSYATLVYSQNTYHY). Residues 298–318 (AVTLSNVISPLASYLQFFVKI) traverse the membrane as a helical segment. The Cytoplasmic portion of the chain corresponds to 319 to 322 (RSLP). Residues 323–343 (ILAFLTLCSSLTTAVIIYLAA) form a helical membrane-spanning segment. Residues 344-353 (LSPNWIFNSE) lie on the Extracellular side of the membrane. A helical transmembrane segment spans residues 354–374 (TAGTIISIASSLIAAGLHSYL). The Cytoplasmic portion of the chain corresponds to 375–391 (RVMFAALLREGNQKESR). The helical transmembrane segment at 392–412 (LFWCGAFIQIGSFTGSAIMFP) threads the bilayer. The Extracellular segment spans residues 413-427 (LVNVWKLFHSAPSCR).

The protein belongs to the riboflavin transporter family. Expressed in intestine.

It localises to the cell membrane. The enzyme catalyses riboflavin(in) = riboflavin(out). Its activity is regulated as follows. Activity is strongly inhibited by riboflavin analogs, such as lumiflavin and lumichrome. Functionally, riboflavin transporter. Riboflavin transport is Na(+)-independent but pH-sensitive. The sequence is that of Riboflavin transporter rft-1 from Caenorhabditis elegans.